The chain runs to 556 residues: Acetyl-coenzyme A thioesterase (556 aa).

Positions 6-118 (APGEVLMSQA…FSTFVVKPLG (113 aa)) constitute a HotDog ACOT-type 1 domain. K34 carries the post-translational modification N6-succinyllysine. CoA-binding positions include 54 to 56 (TAS) and 83 to 85 (STS). At K97 the chain carries N6-succinyllysine. R145 serves as a coordination point for CoA. An N6-succinyllysine mark is found at K160 and K229. Residues 180–295 (MATSVQSIEL…FLIYNAVDDQ (116 aa)) enclose the HotDog ACOT-type 2 domain. A CoA-binding site is contributed by 235-237 (KFR). The region spanning 341–550 (GTQWDISKKG…IKFIENATHD (210 aa)) is the START domain.

As to quaternary structure, homodimer or homotetramer.

The protein resides in the cytoplasm. It localises to the cytosol. The catalysed reaction is acetyl-CoA + H2O = acetate + CoA + H(+). It catalyses the reaction butanoyl-CoA + H2O = butanoate + CoA + H(+). It carries out the reaction hexanoyl-CoA + H2O = hexanoate + CoA + H(+). The protein operates within lipid metabolism; fatty acid metabolism. Allosterically regulated by ATP (activator) and ADP (inhibitor). Cold labile, it dissociates into inactive monomers at low temperature. Catalyzes the hydrolysis of acyl-CoAs into free fatty acids and coenzyme A (CoASH), regulating their respective intracellular levels. Preferentially hydrolyzes acetyl-CoA. The sequence is that of Acetyl-coenzyme A thioesterase (Acot12) from Rattus norvegicus (Rat).